The primary structure comprises 381 residues: MVESKKTDDYAIEMDKIDQGSKNFEAAAPPQPRSVPSSSLSGNPVLPVLAYCGSSILMTVMNKYVLSGLDFNLNFFLLCVQSIVCIIAIQTCKFCGLITYRDFSADEAKKWFPISLLLIGMIYTGSKALQFLSIPVYTIFKNLTIILIAYGEVLWFGGSVTGLTLFSFGLMVLSSIIAAWADIKHAVESSGDTSAQVSTLNAGYIWMLINCLCTSSYVLGMRKRIKLTNFKDFDTMFYNNLLSIPVLVVLTGLMEDWSSANIDRNFPQADRSSIMFAMILSGLSSVFISYTSAWCVRVTSSTTYSMVGALNKLPIALSGLIFFDAPVTFPSVSAIAVGFVSGIVYAIAKIKQNAKPKTGVLPTSNPLVSASSQSMRDSLRS.

Residues 1-39 (MVESKKTDDYAIEMDKIDQGSKNFEAAAPPQPRSVPSSS) are Cytoplasmic-facing. The helical transmembrane segment at 40-60 (LSGNPVLPVLAYCGSSILMTV) threads the bilayer. Residues 61-68 (MNKYVLSG) are Lumenal-facing. Residues 69–89 (LDFNLNFFLLCVQSIVCIIAI) traverse the membrane as a helical segment. Residues 90–109 (QTCKFCGLITYRDFSADEAK) are Cytoplasmic-facing. The helical transmembrane segment at 110 to 126 (KWFPISLLLIGMIYTGS) threads the bilayer. Residues 127 to 133 (KALQFLS) are Lumenal-facing. A helical transmembrane segment spans residues 134-150 (IPVYTIFKNLTIILIAY). Over 151–159 (GEVLWFGGS) the chain is Cytoplasmic. A helical membrane pass occupies residues 160–181 (VTGLTLFSFGLMVLSSIIAAWA). Topologically, residues 182–199 (DIKHAVESSGDTSAQVST) are lumenal. Residues 200–220 (LNAGYIWMLINCLCTSSYVLG) form a helical membrane-spanning segment. Residues 221–232 (MRKRIKLTNFKD) lie on the Cytoplasmic side of the membrane. A helical transmembrane segment spans residues 233–253 (FDTMFYNNLLSIPVLVVLTGL). Residues 254–273 (MEDWSSANIDRNFPQADRSS) lie on the Lumenal side of the membrane. A helical transmembrane segment spans residues 274 to 294 (IMFAMILSGLSSVFISYTSAW). The Cytoplasmic portion of the chain corresponds to 295 to 302 (CVRVTSST). A helical membrane pass occupies residues 303-323 (TYSMVGALNKLPIALSGLIFF). Residues 324-326 (DAP) are Lumenal-facing. The helical transmembrane segment at 327 to 347 (VTFPSVSAIAVGFVSGIVYAI) threads the bilayer. The Cytoplasmic portion of the chain corresponds to 348 to 381 (AKIKQNAKPKTGVLPTSNPLVSASSQSMRDSLRS).

It belongs to the TPT transporter family. SLC35D subfamily. Homooligomer.

Its subcellular location is the golgi apparatus membrane. The protein resides in the cytoplasmic vesicle membrane. The protein localises to the endoplasmic reticulum membrane. Functionally, involved in the import of GDP-mannose from the cytoplasm into the Golgi lumen. The protein is GDP-mannose transporter (gmt1) of Aspergillus oryzae (strain ATCC 42149 / RIB 40) (Yellow koji mold).